A 489-amino-acid polypeptide reads, in one-letter code: Rhamnulokinase (489 aa).

Position 13–17 (13–17) interacts with ATP; that stretch reads ASSGR. A disulfide bridge connects residues C68 and C222. Residues G83 and 236–238 each bind substrate; that span reads HDT. The active-site Proton acceptor is the D237. T259 is a binding site for ATP. N296 provides a ligand contact to substrate. ATP is bound at residue Q304. A disulfide bridge connects residues C353 and C370. G402 provides a ligand contact to ATP. A disulfide bridge connects residues C413 and C417.

It belongs to the rhamnulokinase family. As to quaternary structure, monomer. Mg(2+) is required as a cofactor.

The catalysed reaction is L-rhamnulose + ATP = L-rhamnulose 1-phosphate + ADP + H(+). The protein operates within carbohydrate degradation; L-rhamnose degradation; glycerone phosphate from L-rhamnose: step 2/3. Its function is as follows. Involved in the catabolism of L-rhamnose (6-deoxy-L-mannose). Catalyzes the transfer of the gamma-phosphate group from ATP to the 1-hydroxyl group of L-rhamnulose to yield L-rhamnulose 1-phosphate. The sequence is that of Rhamnulokinase from Escherichia coli (strain SE11).